Here is a 570-residue protein sequence, read N- to C-terminus: Interleukin-1 receptor accessory protein (570 aa).

An N-terminal signal peptide occupies residues 1-20 (MTLLWCVVSLYFYGILQSDA). 3 Ig-like C2-type domains span residues 21–128 (SERC…VAFP), 141–230 (PMKL…RTLT), and 242–348 (PPVI…AKVK). Residues 21–367 (SERCDDWGLD…VELACGFGAT (347 aa)) lie on the Extracellular side of the membrane. 5 disulfide bridges follow: C24–C122, C47–C114, C137–C181, C160–C212, and C266–C332. Residue N57 is glycosylated (N-linked (GlcNAc...) asparagine). An essential for interaction with PTPRD region spans residues 69 to 85 (IWYWTRQDRDLEEPINF). N-linked (GlcNAc...) asparagine glycosylation is found at N107, N111, and N118. N-linked (GlcNAc...) asparagine glycosylation is found at N196, N209, and N299. The chain crosses the membrane as a helical span at residues 368-388 (VLLVVILIVVYHVYWLEMVLF). At 389–570 (YRAHFGTDET…GLSYSSLKNV (182 aa)) the chain is on the cytoplasmic side. Residues 403–546 (KEYDIYVSYA…RFWKQLQVAM (144 aa)) enclose the TIR domain. E482 is a catalytic residue. Residues 549–570 (KKSPRRSSSDEQGLSYSSLKNV) form a disordered region. S557 is subject to Phosphoserine. Residues 558–570 (DEQGLSYSSLKNV) show a composition bias toward polar residues.

This sequence belongs to the interleukin-1 receptor family. In terms of assembly, the interleukin-36 receptor complex is a heterodimer of IL1RL2 and IL1RAP; the association is inhibited by IL36RN. The interleukin-1 receptor complex is a heterodimer of IL1R1 and IL1RAP. Associates with IL1R2 to form a non-signaling interleukin-1 receptor complex. Isoform 4 interacts with IL1R1 in an interleukin-1-dependent manner. Interacts with IL-33-bound IL1RL1 to form the minimal interleukin-33 signaling complex with a 1:1:1 stoichiometry. Interacts with KIT (independently of stimulation with KITLG/SCF). A mast cell-specific KITLG/SCF-induced interleukin-33 signaling complex contains IL1RL1, IL1RAP, KIT and MYD88. Interacts (via the first immunoglobilin domain) with PTPRD (via the third immunoglobilin domain); induces pre- and postsynaptic differentiation of neurons. As to expression, detected in liver, skin, placenta, thymus and lung. Isoform 4 is predominantly expressed in brain. Overexpressed on candidate chronic myeloid leukemia (CML) stem cells, hematopoietic stem cells and mononuclear cells of patients with acute myeloid leukemia (AML). Overexpressed in patients with chronic obstructive pulmonary disease (COPD). Expressed in T-helper 1 (Th1) and T-helper 2 (Th2) cell subsets.

It is found in the cell membrane. Its subcellular location is the secreted. The catalysed reaction is NAD(+) + H2O = ADP-D-ribose + nicotinamide + H(+). In terms of biological role, coreceptor for IL1RL2 in the IL-36 signaling system. Coreceptor with IL1R1 in the IL-1 signaling system. Associates with IL1R1 bound to IL1B to form the high affinity interleukin-1 receptor complex which mediates interleukin-1-dependent activation of NF-kappa-B and other pathways. Signaling involves the recruitment of adapter molecules such as TOLLIP, MYD88, and IRAK1 or IRAK2 via the respective TIR domains of the receptor/coreceptor subunits. Recruits TOLLIP to the signaling complex. Does not bind to interleukin-1 alone; binding of IL1RN to IL1R1, prevents its association with IL1R1 to form a signaling complex. The cellular response is modulated through a non-signaling association with the membrane IL1R2 decoy receptor. Coreceptor for IL1RL1 in the IL-33 signaling system. Can bidirectionally induce pre- and postsynaptic differentiation of neurons by trans-synaptically binding to PTPRD. May play a role in IL1B-mediated costimulation of IFNG production from T-helper 1 (Th1) cells. Functionally, associates with secreted ligand-bound IL1R2 and increases the affinity of secreted IL1R2 for IL1B; this complex formation may be the dominant mechanism for neutralization of IL1B by secreted/soluble receptors. Enhances the ability of secreted IL1R1 to inhibit IL-33 signaling. Its function is as follows. Unable to mediate canonical IL-1 signaling. Required for Src phosphorylation by IL1B. May be involved in IL1B-potentiated NMDA-induced calcium influx in neurons. This is Interleukin-1 receptor accessory protein (IL1RAP) from Homo sapiens (Human).